We begin with the raw amino-acid sequence, 280 residues long: UPF0758 protein Atu1607 (280 aa).

A disordered region spans residues 1-22 (MAKRPALPSADLSPTSGFEAGE). Residues 158-280 (VLGSWSSVID…HASFKGLRLI (123 aa)) form the MPN domain. Residues His229, His231, and Asp242 each contribute to the Zn(2+) site. Residues 229-242 (HNHPSGDPTPSRAD) carry the JAMM motif motif.

The protein belongs to the UPF0758 family.

In Agrobacterium fabrum (strain C58 / ATCC 33970) (Agrobacterium tumefaciens (strain C58)), this protein is UPF0758 protein Atu1607.